The primary structure comprises 323 residues: Synaptonemal complex central element protein 1 (323 aa).

The span at 1–10 shows a compositional bias: polar residues; the sequence is MAGRPGSSNA. 2 disordered regions span residues 1 to 31 and 294 to 323; these read MAGRPGSSNAEAAGAVGPTDEARGQAESSQK and KQEEEAGLGEAANPKPLGVSEEKDQEPSTK. Composition is skewed to basic and acidic residues over residues 20 to 31 and 313 to 323; these read DEARGQAESSQK and SEEKDQEPSTK. The stretch at 25 to 290 forms a coiled coil; it reads QAESSQKIED…EKLGVQVLAQ (266 aa).

Belongs to the SYCE family. As to quaternary structure, homodimer. Found in a complex with SYCP1 and SYCE2. Interacts with SYCP1, SYCE2 and SYCE3. Interacts with SIX6OS1.

It localises to the nucleus. It is found in the chromosome. Its function is as follows. Major component of the transverse central element of synaptonemal complexes (SCS), formed between homologous chromosomes during meiotic prophase. Requires SYCP1 in order to be incorporated into the central element. May have a role in the synaptonemal complex assembly, stabilization and recombination. The protein is Synaptonemal complex central element protein 1 (SYCE1) of Bos taurus (Bovine).